The sequence spans 355 residues: UPF0421 protein BALH_2468 (355 aa).

Helical transmembrane passes span 19-39 (IAVF…IFAV), 74-94 (FTFF…FTIV), 109-129 (TLTA…AFLI), and 131-151 (LATT…ILPP).

Belongs to the UPF0421 family.

It localises to the cell membrane. This chain is UPF0421 protein BALH_2468, found in Bacillus thuringiensis (strain Al Hakam).